The chain runs to 1221 residues: DNA-directed RNA polymerase subunit beta' (1221 aa).

Zn(2+) contacts are provided by Cys60, Cys62, Cys75, and Cys78. The Mg(2+) site is built by Asp449, Asp451, and Asp453. Zn(2+) contacts are provided by Cys820, Cys894, Cys901, and Cys904.

It belongs to the RNA polymerase beta' chain family. The RNAP catalytic core consists of 2 alpha, 1 beta, 1 beta' and 1 omega subunit. When a sigma factor is associated with the core the holoenzyme is formed, which can initiate transcription. Mg(2+) serves as cofactor. Zn(2+) is required as a cofactor.

The catalysed reaction is RNA(n) + a ribonucleoside 5'-triphosphate = RNA(n+1) + diphosphate. Its function is as follows. DNA-dependent RNA polymerase catalyzes the transcription of DNA into RNA using the four ribonucleoside triphosphates as substrates. In Ligilactobacillus salivarius (strain UCC118) (Lactobacillus salivarius), this protein is DNA-directed RNA polymerase subunit beta'.